We begin with the raw amino-acid sequence, 100 residues long: Putative ESAT-6-like protein Y (100 aa).

It belongs to the WXG100 family.

This chain is Putative ESAT-6-like protein Y, found in Mycobacterium leprae (strain TN).